Reading from the N-terminus, the 441-residue chain is Transforming protein p54/c-ets-1 (441 aa).

The PNT domain maps to 51 to 136; the sequence is ATFSGFAKEQ…EHLEILQKEE (86 aa). An activation domain; required for transcription activation region spans residues 130-243; sequence EILQKEEAKP…DNMCMGRASR (114 aa). The segment at 304-312 is helix HI-1; sequence FKDYVRDRA. The interval 323-330 is helix HI-2; sequence AAALAGYT. Positions 335–415 form a DNA-binding region, ETS; the sequence is IQLWQFLLEL…AGKRYVYRFV (81 aa). The tract at residues 418–422 is helix H4; the sequence is LQSLL. The helix H5 stretch occupies residues 426-432; that stretch reads PEELHAM.

This sequence belongs to the ETS family. As to quaternary structure, binds DNA as a homodimer; homodimerization is required for transcription activation.

It localises to the nucleus. The protein resides in the cytoplasm. Its activity is regulated as follows. Autoinhibited by a module composed of four alpha helices (HI-1, HI-2, H4, and H5) that flank the DNA-binding ETS domain, reducing the affinity for DNA. Transcription factor. Directly controls the expression of cytokine and chemokine genes in a wide variety of different cellular contexts. This chain is Transforming protein p54/c-ets-1 (ETS1), found in Gallus gallus (Chicken).